A 208-amino-acid chain; its full sequence is Protein-L-isoaspartate O-methyltransferase (208 aa).

Ser59 is a catalytic residue.

Belongs to the methyltransferase superfamily. L-isoaspartyl/D-aspartyl protein methyltransferase family.

The protein resides in the cytoplasm. It catalyses the reaction [protein]-L-isoaspartate + S-adenosyl-L-methionine = [protein]-L-isoaspartate alpha-methyl ester + S-adenosyl-L-homocysteine. Functionally, catalyzes the methyl esterification of L-isoaspartyl residues in peptides and proteins that result from spontaneous decomposition of normal L-aspartyl and L-asparaginyl residues. It plays a role in the repair and/or degradation of damaged proteins. In Vibrio vulnificus (strain CMCP6), this protein is Protein-L-isoaspartate O-methyltransferase.